The chain runs to 1262 residues: MFWHLLCVPNDENASAPDDGNQSCQPSSKQDQYLSPNRNCQKNLLRLYPPPPSKPPPLVGAILQTRLLHQISPSAIADADADLNAVGELLYPNVLQRSATLPAKHNRLGVRSRVTFKVPSSNLPAQDSYSHQPRNQVAVAAKDGILVDVKAKESVKMTSEDLLQPGHVVKERWKVVRKIGGGGFGEIYEGQDLITREQVALKVESARQPKQVLKMEVAVLKKLQGKEHVCRFIGCGRNDRFNYVVMQLQGKNLAELRRAQPRGAFSLSTTLRLGLQILKAIESIHSVGFLHRDIKPSNFSVGRLPYNCRRVYMLDFGLARQYTTGTGEVRCPRAAAGFRGTVRYASINAHRNREMGRHDDLWSLFYMLVEFVNGQLPWRKIKDKEQVGLTKEKYDHRILLKHLPSDLKQFLEHIQSLTYGDRPDYAMLIGLFERCMKRRGVKESDPYDWEKVDSTAIGNISATGNPSIPIKSDYMHGNITQMTVAASNASGTEYIRKRAEIETAHITATDPLNIKEKVDKNCNATSLAQPAKGSGEPMVQHGNAANNQNITSKGLQQQSTLTNSQVAIANIQSAPSMIEREDVQYTKLEEGAPTKFITMKPNGECDNVDIAAKCIFEQKHVEANDDIVGRASLSGVEQHYKSQIKKHNSPEIANKQIQRTGTVTNDKTSEVNRSTEEQKSTFGRLRVLTAPPMSVHDLPSGGGHSHQVSDLSGKQDPYAATSNAAPIGINSSSTKFGSQHGQIFGLAAMPPINRRSATSTNLRPSSSASQRINSGSTIGGAVGNGSNTARSSVAGDHSVTQFALIDDENVSALQQVTKGGALTLASQWKSQFDDSEDTTDNEWNREHQLQPNLEQLIKLDISLPLNEAKPFPQHGVAGTGKLINPPGEAKGRPKRYTLNITGIENYEALRISIPNCWSEPAMGNVLRKGLEPPAVQQAAFDDTVYRMDIARNVCVRETYSEITHLARPSTSSVLRNRLPSPFKKDSALQLNSTNDSLDKSRHRNSLPNVSVNDIFDDLQMKLNLDLGSAIQENNCCISGRLEIRVIPKDTSHPDDSVYYDAMGAVKNTPTANEGHDHSDQAVNNCDEMEATSAVIAFPNKSISKIMSPPGRDATEERTGASLCSLYSAGVNKLKLNGNTAPRTQFKKGSTDGFGENESEFDFPLLNPSKIPVRQSKCASWAGADFISASKPLESAEVPQEIPYHPQSDTTYSVIDSIPVRKTTYSIALECPPNISDLTPGLSYFYCNIVVPLRLFSILLTES.

The segment at 13 to 35 (NASAPDDGNQSCQPSSKQDQYLS) is disordered. Positions 20–35 (GNQSCQPSSKQDQYLS) are enriched in polar residues. The 264-residue stretch at 173 to 436 (WKVVRKIGGG…MLIGLFERCM (264 aa)) folds into the Protein kinase domain. Residues 179-187 (IGGGGFGEI) and lysine 202 contribute to the ATP site. The active-site Proton acceptor is the aspartate 293. 3 disordered regions span residues 662-724 (TVTN…TSNA), 755-792 (RSAT…ARSS), and 984-1003 (KDSA…SRHR). The segment covering 667 to 679 (KTSEVNRSTEEQK) has biased composition (basic and acidic residues). Positions 755-776 (RSATSTNLRPSSSASQRINSGS) are enriched in polar residues.

It belongs to the protein kinase superfamily. CK1 Ser/Thr protein kinase family. In terms of assembly, interacts with Mgtor. Mg(2+) is required as a cofactor. Detected in larval brain.

Its subcellular location is the cytoplasm. The protein resides in the cytoskeleton. It localises to the spindle. It carries out the reaction L-seryl-[protein] + ATP = O-phospho-L-seryl-[protein] + ADP + H(+). The catalysed reaction is L-threonyl-[protein] + ATP = O-phospho-L-threonyl-[protein] + ADP + H(+). Its function is as follows. Probable serine/threonine protein kinase. In Drosophila melanogaster (Fruit fly), this protein is Tau-tubulin kinase homolog Asator.